The chain runs to 54 residues: Ovomucoid (54 aa).

Residues 4-54 enclose the Kazal-like domain; sequence VNCSDYPKPVCSLLYMPLCGSDNKTYGNKCNFCNAVADSNGTLTLSHFGKC. Disulfide bonds link cysteine 6/cysteine 36, cysteine 14/cysteine 33, and cysteine 22/cysteine 54. N-linked (GlcNAc...) asparagine glycosylation occurs at asparagine 43.

It is found in the secreted. The polypeptide is Ovomucoid (Geococcyx californianus (Greater roadrunner)).